The following is a 481-amino-acid chain: Proton-coupled amino acid transporter 2 (481 aa).

The Cytoplasmic segment spans residues 1–56 (MSVTKSAGSPQVAATVKLDLVSFPESAKKVQSQDPNPVNGSSSESSEKTKGITGFQ). The interval 26-49 (SAKKVQSQDPNPVNGSSSESSEKT) is disordered. Positions 29–40 (KVQSQDPNPVNG) are enriched in polar residues. The chain crosses the membrane as a helical span at residues 57–77 (TLVHLVKGNMGTGILGLPLAV). Residues 78-79 (KN) are Extracellular-facing. A helical transmembrane segment spans residues 80-100 (AGILMGPLSLLVMGLIACHCM). At 101–146 (HILVRCAQRFCHRLNKPFMDYGDTVMHGLASSPNTWLQSHAHWGRH) the chain is on the cytoplasmic side. Residues 147-167 (AVSFFLIVTQLGFCCVYIVFL) form a helical membrane-spanning segment. At 168-195 (ADNLKQVVEAVNSTTISCHKNETVVLTP) the chain is on the extracellular side. A helical membrane pass occupies residues 196–216 (TIDSRLYMLAFLPVLGLLVFI). Residues 217-220 (RNLR) lie on the Cytoplasmic side of the membrane. A helical transmembrane segment spans residues 221 to 241 (VLTIFSLLANVSMLVSLVIIG). At 242–262 (QYIIQGIPDPSQLPLVASWKT) the chain is on the extracellular side. A helical membrane pass occupies residues 263 to 283 (YPLFFGTAIFSFESIGVVLPL). At 284–295 (ENKMKDARRFPT) the chain is on the cytoplasmic side. A helical transmembrane segment spans residues 296-316 (ILSLGMSIITTLYIAIGALGY). Residues 317 to 343 (LRFGDDIKASITLNLPNCWLYQSVKLL) are Extracellular-facing. Residues 344–364 (YVVGILCTHALQFYVPAEIII) traverse the membrane as a helical segment. The Cytoplasmic portion of the chain corresponds to 365–377 (PLAVSQVSKRWAL). The chain crosses the membrane as a helical span at residues 378 to 398 (PVDLSIRLALVCVTCMLAILI). Residues 399 to 402 (PRLD) lie on the Extracellular side of the membrane. The chain crosses the membrane as a helical span at residues 403 to 423 (LVLSLVGSVSSSALALIIPPL). Over 424–444 (LEVTTYYGEGMSPLTITKDAL) the chain is Cytoplasmic. The helical transmembrane segment at 445 to 465 (ISILGFMGFVVGTYQALDELI) threads the bilayer. The Extracellular portion of the chain corresponds to 466 to 481 (RSGNSLPLSNSTMFIQ).

Belongs to the amino acid/polyamine transporter 2 family. As to expression, expressed in lung and spleen, and to a lower extent in brain, heart, kidney and skeletal muscle.

The protein resides in the cell membrane. Its subcellular location is the endoplasmic reticulum membrane. It is found in the recycling endosome membrane. It carries out the reaction glycine(in) + H(+)(in) = glycine(out) + H(+)(out). The catalysed reaction is L-alanine(in) + H(+)(in) = L-alanine(out) + H(+)(out). It catalyses the reaction D-alanine(in) + H(+)(in) = D-alanine(out) + H(+)(out). The enzyme catalyses L-proline(out) + H(+)(out) = L-proline(in) + H(+)(in). It carries out the reaction D-proline(out) + H(+)(out) = D-proline(in) + H(+)(in). The catalysed reaction is 4-hydroxy-L-proline(in) + H(+)(in) = 4-hydroxy-L-proline(out) + H(+)(out). It catalyses the reaction L-serine(in) + H(+)(in) = L-serine(out) + H(+)(out). The enzyme catalyses D-serine(out) + H(+)(out) = D-serine(in) + H(+)(in). It carries out the reaction beta-alanine(in) + H(+)(in) = beta-alanine(out) + H(+)(out). The catalysed reaction is 4-aminobutanoate(in) + H(+)(in) = 4-aminobutanoate(out) + H(+)(out). It catalyses the reaction sarcosine(in) + H(+)(in) = sarcosine(out) + H(+)(out). The enzyme catalyses N,N-dimethylglycine(in) + H(+)(in) = N,N-dimethylglycine(out) + H(+)(out). Its activity is regulated as follows. Inhibited by L- and D-pipecolic acid, nipecotic acid, isonipecotic acid, L- and D-cycloserine, and L-2-azetidine-carboxylate. Its function is as follows. Electrogenic proton/amino acid symporter with a high selectivity for the small side chains amino acids glycine, alanine and proline, where both L- and D-enantiomers are transported. Extension of the backbone length, as in beta-alanine and 4-aminobutanoate or methylation of the amino group, as in sarcosine and N,N-dimethylglycine, are also tolerated but decrease transport efficiency. A free carboxyl group is preferred. In Rattus norvegicus (Rat), this protein is Proton-coupled amino acid transporter 2.